Consider the following 481-residue polypeptide: Lincomycin resistance protein (481 aa).

14 helical membrane passes run 30 to 50 (WVTLVFLAVLQLLIAVDVTVV), 67 to 87 (QLTWVVTGYTVVGGGLLMVGG), 99 to 119 (LLFGAFLFGASSLAAGLAPNL), 127 to 147 (FGQGAGEALSLPAAMSLIACS), 162 to 182 (VASVGLVLGFLLSGVITQLFS), 185 to 205 (WIFLINIPLVSLVLVAVLLLV), 215 to 235 (PVDLPGALLFTAAPLLLIFGV), 245 to 265 (LPLAVGSLLAAAVCAAAFVAV), 285 to 305 (LVANGATVLLSAALSTSFFLL), 318 to 338 (IEAGLSFLPLGLSLILACVLV), 340 to 360 (GLIERIGTTGAAVLGMALAGP), 374 to 394 (LLTSVFPGMILLLRMATGLVA), 421 to 441 (LGGASGIAVYVSIGFSPHLGG), and 446 to 466 (FTVAYSLAGIGLIAAVLAVLA).

This sequence belongs to the major facilitator superfamily. TCR/Tet family.

It localises to the cell membrane. In terms of biological role, proton-dependent transporter. May mediate the efflux of lincomycin. This is Lincomycin resistance protein (lmrA) from Streptomyces lincolnensis.